Reading from the N-terminus, the 673-residue chain is Annexin A6 (673 aa).

Ala-2 carries the N-acetylalanine modification. Residue Ser-13 is modified to Phosphoserine. 8 Annexin repeats span residues 20–91 (FDPN…GLMR), 92–163 (PPAY…VLLQ), 175–247 (DLVQ…AVVK), 251–322 (STPE…KLSG), 363–434 (FNPD…GLMM), 435–506 (PPAH…SLAT), 521–595 (EDAQ…AIVQ), and 599–670 (NKPL…ALCG). Tyr-30 bears the Phosphotyrosine mark. 4 positions are modified to N6-acetyllysine: Lys-63, Lys-68, Lys-75, and Lys-81. Tyr-201 carries the post-translational modification Phosphotyrosine. An N6-acetyllysine mark is found at Lys-306, Lys-370, and Lys-418. Position 422 is a phosphoserine (Ser-422). Lys-483 bears the N6-acetyllysine mark. A Phosphoserine modification is found at Ser-537. N6-acetyllysine is present on Lys-620.

This sequence belongs to the annexin family. Post-translationally, phosphorylated in response to growth factor stimulation.

The protein resides in the cytoplasm. It localises to the melanosome. In terms of biological role, may associate with CD21. May regulate the release of Ca(2+) from intracellular stores. The sequence is that of Annexin A6 (ANXA6) from Homo sapiens (Human).